We begin with the raw amino-acid sequence, 250 residues long: UPF0259 membrane protein Spro_2675 (250 aa).

6 helical membrane passes run 23-43 (ILMLALLTAFISVLLNQAFSP), 87-107 (AATFSALVGNVLLVGGMLTLI), 132-152 (LLLLLFICTLLIQLGLTLFVV), 156-176 (IMAIAFSLAPVITATDKKGVF), 192-212 (VIVPAMMLWLAAKLLVLFMVS), and 222-242 (ASVVLTALSNLVSALLLIYLF).

The protein belongs to the UPF0259 family.

Its subcellular location is the cell inner membrane. The polypeptide is UPF0259 membrane protein Spro_2675 (Serratia proteamaculans (strain 568)).